Here is a 236-residue protein sequence, read N- to C-terminus: MSLGLVGRKVGMTRIFTEEGDSQPVTVLDVSNNRVTQIKTPATDGYSAVQVTFGKRRAIRVNKPSAGHFAKAAVEAGEILREFRVAEEILGTLSPGTVIGLDIFQPGQRVDVTGTSIGKGYAGAIKRHGFASNRASHGNSRSHNVPGSIGMAQDPGRVFPGKRMTGHLGNVRRTIQNLEILRIDAERGLLIIKGAIPGSKGGDVTVSPSIRSARPTNNGNVNAAAKGGAKSGKKGG.

2 disordered regions span residues 132-153 (SNRA…GMAQ) and 200-236 (KGGD…KKGG). Positions 133 to 145 (NRASHGNSRSHNV) are enriched in polar residues. Position 153 is an N5-methylglutamine (Gln153). Polar residues predominate over residues 206–216 (VSPSIRSARPT). Over residues 217-228 (NNGNVNAAAKGG) the composition is skewed to low complexity.

The protein belongs to the universal ribosomal protein uL3 family. Part of the 50S ribosomal subunit. Forms a cluster with proteins L14 and L19. In terms of processing, methylated by PrmB.

Functionally, one of the primary rRNA binding proteins, it binds directly near the 3'-end of the 23S rRNA, where it nucleates assembly of the 50S subunit. The polypeptide is Large ribosomal subunit protein uL3 (Nitrosospira multiformis (strain ATCC 25196 / NCIMB 11849 / C 71)).